Here is a 553-residue protein sequence, read N- to C-terminus: Efflux pump mlcE (553 aa).

Residues 1–19 (MSEPLPPKEGEPRPQKEES) show a composition bias toward basic and acidic residues. Residues 1 to 29 (MSEPLPPKEGEPRPQKEESQNDTLEATES) form a disordered region. An N-linked (GlcNAc...) asparagine glycan is attached at asparagine 21. Transmembrane regions (helical) follow at residues 41-61 (LVVA…SIIV), 77-96 (VGWY…PLAG), 101-121 (LLGL…GSVL), 136-156 (AVAG…LSTA), 164-184 (VLIG…PLLG), 196-216 (CFYI…VITI), 245-265 (LVGF…LEWG), 273-293 (SSVI…FVLW), 319-339 (LFMG…PIYF), 352-372 (VYML…GFAI), 376-396 (GYYL…AGLV), 440-460 (ALGI…FLDF), and 516-536 (TFYL…GMGW). N-linked (GlcNAc...) asparagine glycosylation occurs at asparagine 543.

It belongs to the major facilitator superfamily. TCR/Tet family.

Its subcellular location is the membrane. In terms of biological role, efflux pump; part of the gene cluster that mediates the biosynthesis of compactin, also known as mevastatin or ML-236B, and which acts as a potent competitive inhibitor of HMG-CoA reductase. The protein is Efflux pump mlcE of Penicillium citrinum.